Consider the following 695-residue polypeptide: ATP-dependent zinc metalloprotease FtsH (695 aa).

The Cytoplasmic segment spans residues 1–15 (MNNNKQPKQGNFVKN). The helical transmembrane segment at 16–36 (ILMWVILAIVVVVGFNFFFSS) threads the bilayer. Topologically, residues 37 to 139 (NQSSVDKISY…QASSSGMWVQ (103 aa)) are extracellular. Residues 140–160 (ILSYIIPMLLFVGIFWLMMGG) form a helical membrane-spanning segment. At 161–695 (MGARGGGGGG…KEKSEDETAE (535 aa)) the chain is on the cytoplasmic side. 233–240 (GPPGTGKT) is an ATP binding site. Histidine 456 is a Zn(2+) binding site. Glutamate 457 is an active-site residue. Positions 460 and 532 each coordinate Zn(2+). A disordered region spans residues 657–695 (KDANANVDDFSNINIYNGDEKTDSKPEENKEKSEDETAE). The segment covering 674-695 (GDEKTDSKPEENKEKSEDETAE) has biased composition (basic and acidic residues).

This sequence in the central section; belongs to the AAA ATPase family. The protein in the C-terminal section; belongs to the peptidase M41 family. Homohexamer. Zn(2+) is required as a cofactor.

The protein localises to the cell membrane. Its function is as follows. Acts as a processive, ATP-dependent zinc metallopeptidase for both cytoplasmic and membrane proteins. Plays a role in the quality control of integral membrane proteins. This is ATP-dependent zinc metalloprotease FtsH from Lactococcus lactis subsp. lactis (strain IL1403) (Streptococcus lactis).